The following is a 410-amino-acid chain: F-box protein At5g36730 (410 aa).

The F-box domain occupies Met-1–Leu-46.

The chain is F-box protein At5g36730 from Arabidopsis thaliana (Mouse-ear cress).